A 473-amino-acid chain; its full sequence is MAVKTYEAGVKDYRQTYWAPEYVPLDSDILACFKITPQPGVDREEAAAAVAAESSTGTWTTVWTDLLTDMDYYKGRAYRIEDVPGDDTCFYAFVAYPIDLFEEGSVVNVFTSLVGNVFGFKAVRALRLEDVRFPLAYVKTCNGPPHGIQVERDKMNKYGRPMLGCTIKPKLGLSAKNYGRAVYECLRGGLDFTKDDENVNSQPFIAWRDRFLFVADAIHTAEAETGERKGHYLNVTAPSPEEMYERAEFAKELNMPIIMHDFLTGGFCANTGLARWCRKNGVLLHIHRAMHAVVDRNPHHGIHFRVLAKALRLSGGDHLHTGTVVGKLEGDRAATQGWVDLLRESFVPEDAGRGIFFDQDWGSMPGVFAVASGGIHVWHMPALLAIFGDDAIFQFGGGTLGHPWGNAAGAAANRVALEACVEARNEGRDLEREGKDILTNAAKDSPELKIALETWKEIKFEFDTVDKLDVVNR.

Substrate-binding residues include N116 and T166. K168 acts as the Proton acceptor in catalysis. K170 provides a ligand contact to substrate. The Mg(2+) site is built by K194, D196, and E197. Residue K194 is modified to N6-carboxylysine. The active-site Proton acceptor is H287. 3 residues coordinate substrate: R288, H320, and S372.

The protein belongs to the RuBisCO large chain family. Type I subfamily. Heterohexadecamer of 8 large chains and 8 small chains. Requires Mg(2+) as cofactor.

It catalyses the reaction 2 (2R)-3-phosphoglycerate + 2 H(+) = D-ribulose 1,5-bisphosphate + CO2 + H2O. The catalysed reaction is D-ribulose 1,5-bisphosphate + O2 = 2-phosphoglycolate + (2R)-3-phosphoglycerate + 2 H(+). Its function is as follows. RuBisCO catalyzes two reactions: the carboxylation of D-ribulose 1,5-bisphosphate, the primary event in carbon dioxide fixation, as well as the oxidative fragmentation of the pentose substrate. Both reactions occur simultaneously and in competition at the same active site. The polypeptide is Ribulose bisphosphate carboxylase large chain 1 (Acidithiobacillus ferrooxidans (Thiobacillus ferrooxidans)).